Reading from the N-terminus, the 409-residue chain is Effector protein BipC (409 aa).

Disordered regions lie at residues 268-287 and 330-396; these read RETGESVRHEIDPGGERMSD and SGGQ…VAND. The segment covering 360–369 has biased composition (low complexity); the sequence is AQQTAMAAAS. The segment covering 370–382 has biased composition (basic and acidic residues); it reads ARDEAAHRGRDAA.

It belongs to the SctB/SipC family.

The protein localises to the secreted. The polypeptide is Effector protein BipC (bipC) (Burkholderia thailandensis (strain ATCC 700388 / DSM 13276 / CCUG 48851 / CIP 106301 / E264)).